The following is a 327-amino-acid chain: Interleukin-12 subunit beta (327 aa).

An N-terminal signal peptide occupies residues 1–22 (MHPQQLVVSWFSLVLLASPIVA). Residues 23-106 (MWELEKNVYV…LSRSLLLLHK (84 aa)) form the Ig-like C2-type domain. A disulfide bridge links Cys50 with Cys90. N-linked (GlcNAc...) asparagine glycosylation occurs at Asn223. Residues 238–327 (PPKNLQLRPL…WSEWASVSCS (90 aa)) enclose the Fibronectin type-III domain.

The protein belongs to the IL-12B family. Heterodimer with IL12A; disulfide-linked. The heterodimer is known as interleukin IL-12. Heterodimer with IL23A; disulfide-linked. The heterodimer is known as interleukin IL-23. Also secreted as a monomer. Interacts with NBR1; this interaction promotes IL-12 secretion.

The protein localises to the secreted. Cytokine that can act as a growth factor for activated T and NK cells, enhance the lytic activity of NK/lymphokine-activated killer cells, and stimulate the production of IFN-gamma by resting PBMC. Functionally, associates with IL23A to form the IL-23 interleukin, a heterodimeric cytokine which functions in innate and adaptive immunity. IL-23 may constitute with IL-17 an acute response to infection in peripheral tissues. IL-23 binds to a heterodimeric receptor complex composed of IL12RB1 and IL23R, activates the Jak-Stat signaling cascade, stimulates memory rather than naive T-cells and promotes production of pro-inflammatory cytokines. IL-23 induces autoimmune inflammation and thus may be responsible for autoimmune inflammatory diseases and may be important for tumorigenesis. This Bos taurus (Bovine) protein is Interleukin-12 subunit beta (IL12B).